The primary structure comprises 334 residues: MEDSTIKEEIWIEKYRPVRLDQVAGQEETIERLKSYVATKNLPHLLFSGPPGVGKTASAVSIAREIFGEDLWRENFTELNASDERGIDVVRTKIKNFAKTAPMGGAEFKIIFLDEADALTSDAQSALRRTMERFSNNCRFILSCNYSSRIIEPIQSRCAVFRFRRLSDEAIRKRLEYIAKDQVLSITEDGYEALVYVSQGDMRKAVNSLQAAAFVEPNKSISRGTIYRTTATANPEDIRNLIETALRGNFRVARKELNRLLYEEGLSGEDIVGQIYRAISEMDNRMILDLGLSEKRIVELVDIIGEIDFRLTEGATEKIQLEALLAHFALSNPD.

49-56 provides a ligand contact to ATP; sequence GPPGVGKT.

The protein belongs to the activator 1 small subunits family. RfcS subfamily. As to quaternary structure, heteromultimer composed of small subunits (RfcS) and large subunits (RfcL).

Part of the RFC clamp loader complex which loads the PCNA sliding clamp onto DNA. The sequence is that of Replication factor C small subunit from Methanosarcina barkeri (strain Fusaro / DSM 804).